The following is a 448-amino-acid chain: Chromosomal replication initiator protein DnaA (448 aa).

Residues 1-85 (MHDNLPQIWE…EVHIVVPSEE (85 aa)) form a domain I, interacts with DnaA modulators region. The segment at 85-110 (ERVGDTQNINARRSNAQSPIMGNSPL) is domain II. A domain III, AAA+ region region spans residues 111–327 (ILNPKYTFDT…GALIRIVAYS (217 aa)). Residues G155, G157, K158, and T159 each contribute to the ATP site. Positions 328-448 (SLTNSEVTVE…DAIIKELKSD (121 aa)) are domain IV, binds dsDNA.

Belongs to the DnaA family. As to quaternary structure, oligomerizes as a right-handed, spiral filament on DNA at oriC.

Its subcellular location is the cytoplasm. Plays an essential role in the initiation and regulation of chromosomal replication. ATP-DnaA binds to the origin of replication (oriC) to initiate formation of the DNA replication initiation complex once per cell cycle. Binds the DnaA box (a 9 base pair repeat at the origin) and separates the double-stranded (ds)DNA. Forms a right-handed helical filament on oriC DNA; dsDNA binds to the exterior of the filament while single-stranded (ss)DNA is stabiized in the filament's interior. The ATP-DnaA-oriC complex binds and stabilizes one strand of the AT-rich DNA unwinding element (DUE), permitting loading of DNA polymerase. After initiation quickly degrades to an ADP-DnaA complex that is not apt for DNA replication. Binds acidic phospholipids. In Alkaliphilus metalliredigens (strain QYMF), this protein is Chromosomal replication initiator protein DnaA.